Reading from the N-terminus, the 450-residue chain is tRNA modification GTPase MnmE (450 aa).

Residues arginine 26, glutamate 84, and lysine 123 each coordinate (6S)-5-formyl-5,6,7,8-tetrahydrofolate. In terms of domain architecture, TrmE-type G spans 219–376; sequence GMHVVLVGQP…LKAKLLEMIG (158 aa). Asparagine 229 provides a ligand contact to K(+). GTP-binding positions include 229–234, 248–254, 273–276, and 357–359; these read NVGKSS, TDIAGTT, DTAG, and SAR. Serine 233 serves as a coordination point for Mg(2+). K(+) is bound by residues threonine 248, isoleucine 250, and threonine 253. Threonine 254 contacts Mg(2+). Lysine 450 lines the (6S)-5-formyl-5,6,7,8-tetrahydrofolate pocket.

The protein belongs to the TRAFAC class TrmE-Era-EngA-EngB-Septin-like GTPase superfamily. TrmE GTPase family. In terms of assembly, homodimer. Heterotetramer of two MnmE and two MnmG subunits. K(+) is required as a cofactor.

It is found in the cytoplasm. Functionally, exhibits a very high intrinsic GTPase hydrolysis rate. Involved in the addition of a carboxymethylaminomethyl (cmnm) group at the wobble position (U34) of certain tRNAs, forming tRNA-cmnm(5)s(2)U34. This is tRNA modification GTPase MnmE from Chromobacterium violaceum (strain ATCC 12472 / DSM 30191 / JCM 1249 / CCUG 213 / NBRC 12614 / NCIMB 9131 / NCTC 9757 / MK).